A 122-amino-acid polypeptide reads, in one-letter code: Protein MGF 110-6L (122 aa).

Residues 1–18 (MLVIFLGILGLMASQVLG) form the signal peptide. N-linked (GlcNAc...) asparagine; by host glycosylation is present at asparagine 100. A Prevents secretion from ER motif is present at residues 119–122 (KDEL).

The protein belongs to the asfivirus MGF 110 family. Post-translationally, N-glycosylated.

The protein resides in the host endoplasmic reticulum lumen. Functionally, plays a role in virus cell tropism, and may be required for efficient virus replication in macrophages. The protein is Protein MGF 110-6L of Ornithodoros (relapsing fever ticks).